We begin with the raw amino-acid sequence, 60 residues long: Large ribosomal subunit protein bL32 (60 aa).

The tract at residues 1 to 47 (MAVQQNRKTRSKRGMRRSHDALTSSTLSTDPTTGEKHRRHHVTADGF) is disordered. Positions 7–16 (RKTRSKRGMR) are enriched in basic residues.

This sequence belongs to the bacterial ribosomal protein bL32 family.

This is Large ribosomal subunit protein bL32 from Teredinibacter turnerae (strain ATCC 39867 / T7901).